The chain runs to 349 residues: AA9 family lytic polysaccharide monooxygenase C (349 aa).

Residues 1 to 19 form the signal peptide; sequence MKSTFGLLALAAAAKLVSA. Residues His20 and His102 each coordinate Cu(2+). A disulfide bond links Cys62 and Cys183. His169 contacts O2. Cu(2+) is bound at residue Tyr180. The tract at residues 233–304 is disordered; sequence DGSSSGSSGS…SGSNSGSDSC (72 aa). Composition is skewed to low complexity over residues 234 to 262 and 269 to 304; these read GSSSGSSGSSGSSPATTTAPAVSVTAAPT and TSATPTTFVTATKPATTAAPAAPSASSGSNSGSDSC. One can recognise a CBM1 domain in the interval 311 to 347; it reads GSVKIYGQCGGQNYSGPTSCEAGLICKEWNPYYHQCV. Disulfide bonds link Cys319/Cys336 and Cys330/Cys346. A glycan (N-linked (GlcNAc...) asparagine) is linked at Asn323.

It belongs to the polysaccharide monooxygenase AA9 family. Cu(2+) serves as cofactor.

It localises to the secreted. The enzyme catalyses [(1-&gt;4)-beta-D-glucosyl]n+m + reduced acceptor + O2 = 4-dehydro-beta-D-glucosyl-[(1-&gt;4)-beta-D-glucosyl]n-1 + [(1-&gt;4)-beta-D-glucosyl]m + acceptor + H2O.. Lytic polysaccharide monooxygenase (LPMO) that depolymerizes crystalline and amorphous polysaccharides via the oxidation of scissile alpha- or beta-(1-4)-glycosidic bonds, yielding C4 oxidation products. Catalysis by LPMOs requires the reduction of the active-site copper from Cu(II) to Cu(I) by a reducing agent and H(2)O(2) or O(2) as a cosubstrate. Active on cellulose and cello-oligosaccharides, as well as plant cell wall-derived hemicellulosic polysaccharides. Also active on cello-oligosaccharides such as cellohexaose, cellopentaose or cellotetraose. This chain is AA9 family lytic polysaccharide monooxygenase C, found in Aspergillus fumigatus (strain ATCC MYA-4609 / CBS 101355 / FGSC A1100 / Af293) (Neosartorya fumigata).